Here is a 429-residue protein sequence, read N- to C-terminus: Adenylosuccinate synthetase (429 aa).

Residues 12–18 (GDEGKGK) and 40–42 (GHT) each bind GTP. Catalysis depends on Asp-13, which acts as the Proton acceptor. The Mg(2+) site is built by Asp-13 and Gly-40. IMP-binding positions include 13-16 (DEGK), 38-41 (NAGH), Thr-129, Arg-143, Gln-224, Thr-239, and Arg-303. The active-site Proton donor is the His-41. 299–305 (ATTGRRR) provides a ligand contact to substrate. Residues Arg-305, 331–333 (KLD), and 413–415 (SVG) contribute to the GTP site.

This sequence belongs to the adenylosuccinate synthetase family. In terms of assembly, homodimer. The cofactor is Mg(2+).

It localises to the cytoplasm. The catalysed reaction is IMP + L-aspartate + GTP = N(6)-(1,2-dicarboxyethyl)-AMP + GDP + phosphate + 2 H(+). It functions in the pathway purine metabolism; AMP biosynthesis via de novo pathway; AMP from IMP: step 1/2. In terms of biological role, plays an important role in the de novo pathway of purine nucleotide biosynthesis. Catalyzes the first committed step in the biosynthesis of AMP from IMP. The chain is Adenylosuccinate synthetase from Desulforapulum autotrophicum (strain ATCC 43914 / DSM 3382 / VKM B-1955 / HRM2) (Desulfobacterium autotrophicum).